The chain runs to 425 residues: Serine--tRNA ligase (425 aa).

228–230 (TAE) contacts L-serine. Residue 259-261 (RSE) coordinates ATP. Glu282 serves as a coordination point for L-serine. 346 to 349 (EIAS) provides a ligand contact to ATP. Ser382 serves as a coordination point for L-serine.

Belongs to the class-II aminoacyl-tRNA synthetase family. Type-1 seryl-tRNA synthetase subfamily. In terms of assembly, homodimer. The tRNA molecule binds across the dimer.

It localises to the cytoplasm. It carries out the reaction tRNA(Ser) + L-serine + ATP = L-seryl-tRNA(Ser) + AMP + diphosphate + H(+). It catalyses the reaction tRNA(Sec) + L-serine + ATP = L-seryl-tRNA(Sec) + AMP + diphosphate + H(+). The protein operates within aminoacyl-tRNA biosynthesis; selenocysteinyl-tRNA(Sec) biosynthesis; L-seryl-tRNA(Sec) from L-serine and tRNA(Sec): step 1/1. In terms of biological role, catalyzes the attachment of serine to tRNA(Ser). Is also able to aminoacylate tRNA(Sec) with serine, to form the misacylated tRNA L-seryl-tRNA(Sec), which will be further converted into selenocysteinyl-tRNA(Sec). The sequence is that of Serine--tRNA ligase from Rickettsia canadensis (strain McKiel).